The sequence spans 49 residues: Cytochrome b559 subunit beta (49 aa).

A helical membrane pass occupies residues 24-40 (WLAVHVLGVPTVFFLGA). His-28 serves as a coordination point for heme.

It belongs to the PsbE/PsbF family. In terms of assembly, heterodimer of an alpha subunit and a beta subunit. PSII is composed of 1 copy each of membrane proteins PsbA, PsbB, PsbC, PsbD, PsbE, PsbF, PsbH, PsbI, PsbJ, PsbK, PsbL, PsbM, PsbT, PsbX, PsbY, Psb30/Ycf12, peripheral proteins PsbO, CyanoQ (PsbQ), PsbU, PsbV and a large number of cofactors. It forms dimeric complexes. The cofactor is heme b.

The protein resides in the cellular thylakoid membrane. Its function is as follows. This b-type cytochrome is tightly associated with the reaction center of photosystem II (PSII). PSII is a light-driven water:plastoquinone oxidoreductase that uses light energy to abstract electrons from H(2)O, generating O(2) and a proton gradient subsequently used for ATP formation. It consists of a core antenna complex that captures photons, and an electron transfer chain that converts photonic excitation into a charge separation. The chain is Cytochrome b559 subunit beta from Prochlorococcus marinus (strain MIT 9303).